Here is a 181-residue protein sequence, read N- to C-terminus: ADP-ribosylation factor 1-like 2 (181 aa).

The N-myristoyl glycine moiety is linked to residue Gly-2. The interval 3–16 is important for the stable binding to the membranes; sequence NVFGSLFKGLFGKK. GTP contacts are provided by residues 24 to 32, 126 to 129, and Ala-160; these read GLDAAGKTT and NKQD.

It belongs to the small GTPase superfamily. Arf family.

Its subcellular location is the golgi apparatus membrane. The enzyme catalyses GTP + H2O = GDP + phosphate + H(+). Its activity is regulated as follows. Alternates between an inactive GDP-bound form and an active GTP-bound form. Activated by a guanine nucleotide-exchange factor (GEF) and inactivated by GTPase-activating protein (GAP). In terms of biological role, small GTPase involved in protein trafficking between different compartments. Modulates vesicle budding and uncoating within the Golgi complex. In its GTP-bound form, triggers the recruitment of coatomer proteins to the Golgi membrane. The hydrolysis of ARF1-bound GTP, which is mediated by ARFGAPs proteins, is required for dissociation of coat proteins from Golgi membranes and vesicles. Involved in endoplasmic reticulum dynamics during embryogenesis. Also required for adult germline function. Plays a role in cell shedding during embryogenesis probably by promoting the endocytosis of cell adhesion molecules. During neurogenesis, involved in cell autonomous Q.p neuroblast asymmetric divisions that generate one precursor cell and one apoptotic cell, probably by controlling endocytosis. Plays a role in maintaining mitochondrial morphology. This is ADP-ribosylation factor 1-like 2 (arf-1.2) from Caenorhabditis briggsae.